We begin with the raw amino-acid sequence, 239 residues long: MTENNAKKEQVHTVFQNISSKYDRLNNIISFEQHKVWRKHVMKDMHVKVGSKALDVCCGTADWTIALSKAVGAHGEVTGLDFSENMLEVGKEKTKHMNNIHLVHGDAMNLPFEDNSFDYVTIGFGLRNVPDYLVALKEMNRVLKPGGMIVCLETSQPTMPVFKQVYKLYFKFVMPVFGKLFAKSKEEYEWLQQSTFDFPDKDKLKQLFEQAGFNKIKIRSFTGGVAAMHLGYKQKSSTK.

Residues threonine 60, aspartate 81, and aspartate 106–alanine 107 each bind S-adenosyl-L-methionine.

It belongs to the class I-like SAM-binding methyltransferase superfamily. MenG/UbiE family.

It carries out the reaction a 2-demethylmenaquinol + S-adenosyl-L-methionine = a menaquinol + S-adenosyl-L-homocysteine + H(+). It functions in the pathway quinol/quinone metabolism; menaquinone biosynthesis; menaquinol from 1,4-dihydroxy-2-naphthoate: step 2/2. In terms of biological role, methyltransferase required for the conversion of demethylmenaquinol (DMKH2) to menaquinol (MKH2). In Staphylococcus haemolyticus (strain JCSC1435), this protein is Demethylmenaquinone methyltransferase.